Consider the following 879-residue polypeptide: Beta-mannosidase (879 aa).

The N-terminal stretch at 1–17 (MLLRLLLLLAPCGAGFA) is a signal peptide. 2 N-linked (GlcNAc...) asparagine glycosylation sites follow: Asn35 and Asn77. A disulfide bridge links Cys167 with Cys176. 190 to 192 (WDW) contacts substrate. 2 N-linked (GlcNAc...) asparagine glycosylation sites follow: Asn297 and Asn302. Asn456 serves as a coordination point for substrate. The Proton donor role is filled by Glu457. 3 disulfide bridges follow: Cys540–Cys629, Cys732–Cys761, and Cys764–Cys769. The active-site Nucleophile is Glu554. A glycan (N-linked (GlcNAc...) asparagine) is linked at Asn607. An N-linked (GlcNAc...) asparagine glycan is attached at Asn803.

Belongs to the glycosyl hydrolase 2 family. Monomer. In terms of processing, the N-terminus is blocked. Post-translationally, N-glycosylated. In terms of tissue distribution, detected in kidney (at protein level). Highest expression is found in thyroid tissue. The amount of transcript is significantly higher in normal tissues than in tissues affected by the disease.

The protein localises to the lysosome. It catalyses the reaction Hydrolysis of terminal, non-reducing beta-D-mannose residues in beta-D-mannosides.. Its pathway is glycan metabolism; N-glycan degradation. Its function is as follows. Exoglycosidase that cleaves the single beta-linked mannose residue from the non-reducing end of all N-linked glycoprotein oligosaccharides. This chain is Beta-mannosidase (MANBA), found in Bos taurus (Bovine).